The primary structure comprises 916 residues: Transmembrane channel-like protein 2-A (916 aa).

Residues Met1–Asp13 show a composition bias toward basic and acidic residues. Residues Met1–Gly159 form a disordered region. Topologically, residues Met1–Asn271 are cytoplasmic. The span at Val14–Glu26 shows a compositional bias: acidic residues. Composition is skewed to basic residues over residues Ser31–Gly45 and Lys62–Pro72. Basic and acidic residues predominate over residues Asn97–Lys107. Positions Lys108–Gly117 are enriched in basic residues. Over residues Lys118 to Lys138 the composition is skewed to basic and acidic residues. Positions Asp145–Ser157 are enriched in acidic residues. A helical transmembrane segment spans residues Leu272–Pro292. The Extracellular portion of the chain corresponds to Tyr293–Arg344. Residues Leu345–Ile365 traverse the membrane as a helical segment. Residues Arg366 to Arg438 are Cytoplasmic-facing. The helical transmembrane segment at Val439–Val459 threads the bilayer. The Extracellular portion of the chain corresponds to Val460–Asn478. A helical membrane pass occupies residues Glu479 to Ala499. Residues Glu500–Arg516 are Cytoplasmic-facing. The helical transmembrane segment at Ile517–Asn537 threads the bilayer. Topologically, residues Ala538–Gly649 are extracellular. The chain crosses the membrane as a helical span at residues Leu650–Ile670. The Cytoplasmic portion of the chain corresponds to Asn671–Asn704. The chain crosses the membrane as a helical span at residues Phe705–Ile725. Over Met726–Leu762 the chain is Extracellular. The chain crosses the membrane as a helical span at residues Phe763 to Ile783. Residues Tyr784–Gln916 are Cytoplasmic-facing. Residues Met804–Lys818 show a composition bias toward basic and acidic residues. The tract at residues Met804–Gln916 is disordered. Low complexity predominate over residues Ala883–Gly892.

It belongs to the TMC family. In terms of assembly, interacts (via N-terminus) with both isoforms CD1 and CD3 of PCDH15A (via cytoplasmic domain); this interaction is required for mechanotransduction of the hair cells and correct localization of PCDH15A in hair bundles of the hair cells. In adults, expression is restricted to the hair cells of inner ear and lateral line organ. Expressed at higher levels in the larval inner ear than in the lateral-line neuromasts.

It localises to the cell membrane. The catalysed reaction is Ca(2+)(in) = Ca(2+)(out). In terms of biological role, pore-forming subunit of the mechanotransducer (MET) non-selective cation channel complex located at tips of hair-cell stereocilia. Highly permeable to calcium and likely transports monovalent cations. The sequence is that of Transmembrane channel-like protein 2-A from Danio rerio (Zebrafish).